Consider the following 375-residue polypeptide: Isopentenyl-diphosphate delta-isomerase (375 aa).

Position 8-9 (8-9 (RK)) interacts with substrate. Residues T65, 66–68 (GMT), S96, and N125 each bind FMN. 96–98 (SQR) contacts substrate. Q160 lines the substrate pocket. Mg(2+) is bound at residue E161. FMN-binding positions include K192, T222, 273–275 (GVR), and 294–295 (AL).

The protein belongs to the IPP isomerase type 2 family. Homooctamer. Dimer of tetramers. FMN is required as a cofactor. It depends on NADPH as a cofactor. Requires Mg(2+) as cofactor.

Its subcellular location is the cytoplasm. It carries out the reaction isopentenyl diphosphate = dimethylallyl diphosphate. Involved in the biosynthesis of isoprenoids. Catalyzes the 1,3-allylic rearrangement of the homoallylic substrate isopentenyl (IPP) to its allylic isomer, dimethylallyl diphosphate (DMAPP). The sequence is that of Isopentenyl-diphosphate delta-isomerase from Aeropyrum pernix (strain ATCC 700893 / DSM 11879 / JCM 9820 / NBRC 100138 / K1).